Consider the following 171-residue polypeptide: Secreted protein CSS3 (171 aa).

The N-terminal stretch at M1–A20 is a signal peptide. N37, N139, and N159 each carry an N-linked (GlcNAc...) asparagine glycan.

It is found in the cytoplasm. The protein localises to the secreted. The protein is Secreted protein CSS3 of Saccharomyces cerevisiae (strain ATCC 204508 / S288c) (Baker's yeast).